The primary structure comprises 109 residues: Thioredoxin (109 aa).

One can recognise a Thioredoxin domain in the interval 2–109 (ETLLWKDARE…LVEKIKELFK (108 aa)). C27 and C30 are joined by a disulfide.

The protein belongs to the thioredoxin family.

In terms of biological role, participates in various redox reactions through the reversible oxidation of its active center dithiol to a disulfide and catalyzes dithiol-disulfide exchange reactions. The chain is Thioredoxin (trxA) from Mycoplasmopsis pulmonis (strain UAB CTIP) (Mycoplasma pulmonis).